The sequence spans 828 residues: Glycerol-3-phosphate acyltransferase (828 aa).

An HXXXXD motif motif is present at residues 310 to 315; it reads HRSHID.

The protein belongs to the GPAT/DAPAT family.

It is found in the cell inner membrane. The catalysed reaction is sn-glycerol 3-phosphate + an acyl-CoA = a 1-acyl-sn-glycero-3-phosphate + CoA. It functions in the pathway phospholipid metabolism; CDP-diacylglycerol biosynthesis; CDP-diacylglycerol from sn-glycerol 3-phosphate: step 1/3. The chain is Glycerol-3-phosphate acyltransferase from Pseudomonas putida (strain ATCC 47054 / DSM 6125 / CFBP 8728 / NCIMB 11950 / KT2440).